We begin with the raw amino-acid sequence, 498 residues long: Protein flp (498 aa).

A run of 4 helical transmembrane segments spans residues 6–26 (LYFLSISIIIIVAISIAIYIT), 389–409 (FNIVTVLMTTLILLAFIFSAY), 433–453 (LSLCICIALALILYALPYLIL), and 471–491 (LALITTLIALFSTLIVILLFL).

The protein localises to the cell membrane. In terms of biological role, its precise function is unknown. Has no penicillin-binding activity and is not involved in methicillin resistance. This chain is Protein flp (flp), found in Staphylococcus aureus (strain COL).